Consider the following 227-residue polypeptide: MDGYFKNITCEHEIICNDIRRAILDSAVEAEYSDYRLKSTMITFYSYYQHYLAIDPHCNTDVLNQTLGSNPVKLLLLTKLPCDDEMYDYISLTLGIPPHITGIWIRSWTPKTVYAAVCATEMCLAHMAPLKRIMEENPELFFEFYCVYNRIWKMNKFGEQTEQCCRGGRIMYNILLQCAQHGDPESIFYGLRGVIAFVRSTLGVHSRQLPVDIPNIDMSLLFKHFCV.

This is an uncharacterized protein from Ictalurid herpesvirus 1 (strain Auburn) (IcHV-1).